A 134-amino-acid chain; its full sequence is TSC22 domain family protein 3 (134 aa).

The interval 1 to 60 is AP1-binding; that stretch reads MNTEMYQTPMEVAVYQLHNFSISFFSSLLGGDVVSVKLDNSASGASVVALDNKIEQAMDL. The segment at 76–97 is leucine-zipper; it reads LKEQIRELVEKNSQLERENTLL. Residues 101–134 are disordered; the sequence is ASPEQLEKFQSRLSPEEPAPEAPETPEAPGGSAV. Phosphoserine is present on Ser102. Thr125 is subject to Phosphothreonine. The span at 125–134 shows a compositional bias: low complexity; sequence TPEAPGGSAV.

The protein belongs to the TSC-22/Dip/Bun family. In terms of assembly, can form homodimers, however it is likely to function as a monomer. Interacts with NFKB1. Interacts (via N-terminus) with JUN and FOS; these interactions inhibit the binding of active AP1 to its target DNA. Interacts with MYOD1. Interacts with HDAC1; this interaction affects HDAC1 activity on MYOG promoter and thus inhibits MYOD1 transcriptional activity.

The protein localises to the cytoplasm. Its subcellular location is the nucleus. In terms of biological role, protects T-cells from IL2 deprivation-induced apoptosis through the inhibition of FOXO3A transcriptional activity that leads to the down-regulation of the pro-apoptotic factor BCL2L11. In macrophages, plays a role in the anti-inflammatory and immunosuppressive effects of glucocorticoids and IL10. In T-cells, inhibits anti-CD3-induced NFKB1 nuclear translocation and thereby NFKB1 DNA-binding activities. In vitro, suppresses AP-1 transcription factor complex DNA-binding activities. The polypeptide is TSC22 domain family protein 3 (Tsc22d3) (Rattus norvegicus (Rat)).